The chain runs to 343 residues: Protein RecA (343 aa).

66–73 lines the ATP pocket; the sequence is GPESSGKT.

It belongs to the RecA family.

The protein resides in the cytoplasm. Its function is as follows. Can catalyze the hydrolysis of ATP in the presence of single-stranded DNA, the ATP-dependent uptake of single-stranded DNA by duplex DNA, and the ATP-dependent hybridization of homologous single-stranded DNAs. It interacts with LexA causing its activation and leading to its autocatalytic cleavage. This chain is Protein RecA, found in Rickettsia bellii (strain RML369-C).